We begin with the raw amino-acid sequence, 1040 residues long: Multidrug resistance protein MdtB (1040 aa).

Helical transmembrane passes span 16–36, 347–367, 369–389, 396–416, 440–460, 472–492, 537–557, 863–883, 888–908, 911–931, 968–988, and 998–1018; these read FIMRPVATTLLMVAILLAGII, LMMAIALVVMIIYLFLRNIPA, IIPGFAVPLSLIGTFAVMVFL, LTLMALTIATGFVVDDAIVVI, IGFTIISLTFSLIAVLIPLLF, FAITLAVAILISAVVSLTLTP, WLTLSVALSTLLLSVLLWVFI, LGSTVWLIVAAVVAMYIVLGI, FIHPITILSTLPTAGVGALLA, IAGSELDVIAIIGIILLIGIV, ILMTTLAALLGALPLMLSTGV, and IGMVGGLIVSQVLTLFTTPVI.

Belongs to the resistance-nodulation-cell division (RND) (TC 2.A.6) family. MdtB subfamily. As to quaternary structure, part of a tripartite efflux system composed of MdtA, MdtB and MdtC. MdtB forms a heteromultimer with MdtC.

It localises to the cell inner membrane. Functionally, the MdtABC tripartite complex confers resistance against novobiocin and deoxycholate. This chain is Multidrug resistance protein MdtB, found in Escherichia coli O8 (strain IAI1).